The following is a 426-amino-acid chain: Phosphomethylpyrimidine synthase (426 aa).

Substrate-binding positions include Asn65, Met94, Tyr123, His162, 184–186 (SRG), 225–228 (DGLR), and Glu264. Residue His268 coordinates Zn(2+). Residue Tyr291 coordinates substrate. A Zn(2+)-binding site is contributed by His332. [4Fe-4S] cluster is bound by residues Cys409, Cys412, and Cys416.

Belongs to the ThiC family. [4Fe-4S] cluster serves as cofactor.

It carries out the reaction 5-amino-1-(5-phospho-beta-D-ribosyl)imidazole + S-adenosyl-L-methionine = 4-amino-2-methyl-5-(phosphooxymethyl)pyrimidine + CO + 5'-deoxyadenosine + formate + L-methionine + 3 H(+). It participates in cofactor biosynthesis; thiamine diphosphate biosynthesis. Functionally, catalyzes the synthesis of the hydroxymethylpyrimidine phosphate (HMP-P) moiety of thiamine from aminoimidazole ribotide (AIR) in a radical S-adenosyl-L-methionine (SAM)-dependent reaction. The protein is Phosphomethylpyrimidine synthase of Thermodesulfovibrio yellowstonii (strain ATCC 51303 / DSM 11347 / YP87).